Here is a 221-residue protein sequence, read N- to C-terminus: Urease accessory protein UreF (221 aa).

It belongs to the UreF family. As to quaternary structure, ureD, UreF and UreG form a complex that acts as a GTP-hydrolysis-dependent molecular chaperone, activating the urease apoprotein by helping to assemble the nickel containing metallocenter of UreC. The UreE protein probably delivers the nickel.

The protein localises to the cytoplasm. Functionally, required for maturation of urease via the functional incorporation of the urease nickel metallocenter. The sequence is that of Urease accessory protein UreF from Microcystis aeruginosa (strain NIES-843 / IAM M-2473).